A 184-amino-acid chain; its full sequence is NADH-quinone oxidoreductase subunit B (184 aa).

4 residues coordinate [4Fe-4S] cluster: cysteine 37, cysteine 38, cysteine 103, and cysteine 132.

The protein belongs to the complex I 20 kDa subunit family. NDH-1 is composed of 14 different subunits. Subunits NuoB, C, D, E, F, and G constitute the peripheral sector of the complex. [4Fe-4S] cluster serves as cofactor.

The protein resides in the cell membrane. It catalyses the reaction a quinone + NADH + 5 H(+)(in) = a quinol + NAD(+) + 4 H(+)(out). Functionally, NDH-1 shuttles electrons from NADH, via FMN and iron-sulfur (Fe-S) centers, to quinones in the respiratory chain. The immediate electron acceptor for the enzyme in this species is believed to be a menaquinone. Couples the redox reaction to proton translocation (for every two electrons transferred, four hydrogen ions are translocated across the cytoplasmic membrane), and thus conserves the redox energy in a proton gradient. The polypeptide is NADH-quinone oxidoreductase subunit B (Rhodococcus jostii (strain RHA1)).